The following is a 237-amino-acid chain: RING finger protein vilya (237 aa).

The RING-type zinc finger occupies 21–69; sequence CNSCCALFCDKKHTFFLLACHHVFCERCVKVSAGRTPSDAPIFECSTCR. The tract at residues 172–237 is disordered; the sequence is MHRMAQAYRS…IHPPNNSFDL (66 aa). Low complexity predominate over residues 180-195; that stretch reads RSRSLTSQSSSSAQRS. The span at 221-237 shows a compositional bias: polar residues; it reads RQQITSFIHPPNNSFDL.

As to quaternary structure, may interact with itself and with narya and nenya through their RING-type zinc fingers. Expressed in nurse cell and pro-oocytes (at protein level).

The protein resides in the chromosome. In terms of biological role, required for the formation of DNA double-strand breaks during meiosis together with narya and nenya. The sequence is that of RING finger protein vilya from Drosophila melanogaster (Fruit fly).